A 1594-amino-acid polypeptide reads, in one-letter code: Mucin-like protein (1594 aa).

Residues 1-1530 (DTTAGPDTTS…YETREDGLEM (1530 aa)) lie on the Extracellular side of the membrane. TSP type-1 domains lie at 141 to 196 (DGGF…GSCP), 198 to 253 (DGNF…PPCP), and 255 to 310 (DGNF…GPCP). 9 disulfide bridges follow: cysteine 153–cysteine 190, cysteine 157–cysteine 195, cysteine 168–cysteine 180, cysteine 210–cysteine 247, cysteine 214–cysteine 252, cysteine 225–cysteine 237, cysteine 267–cysteine 304, cysteine 271–cysteine 309, and cysteine 282–cysteine 294. The NIDO domain occupies 400 to 566 (LTISDDAFEQ…GVWFFRLEMN (167 aa)). An AMOP domain is found at 568 to 706 (ILSLAGKKCN…RSCFGYTLRR (139 aa)). Residues 706 to 901 (RRGLIFGDPH…KWQINASQSL (196 aa)) form the VWFD domain. EGF-like domains lie at 1063–1108 (LILL…QYCQ) and 1110–1156 (KIDA…SICE). 14 disulfide bridges follow: cysteine 1067–cysteine 1075, cysteine 1069–cysteine 1096, cysteine 1098–cysteine 1107, cysteine 1114–cysteine 1127, cysteine 1121–cysteine 1141, cysteine 1144–cysteine 1155, cysteine 1161–cysteine 1173, cysteine 1169–cysteine 1182, cysteine 1285–cysteine 1296, cysteine 1292–cysteine 1305, cysteine 1307–cysteine 1320, cysteine 1326–cysteine 1341, cysteine 1334–cysteine 1350, and cysteine 1352–cysteine 1363. One can recognise an EGF-like 3; calcium-binding domain in the interval 1157–1191 (DIDECSDANVSKCDHSCINLPGSYVCDCNQGFSLE). One can recognise an EGF-like 4; calcium-binding domain in the interval 1281–1321 (DINECTTHRHKCSQICHNLDGSYTCSCQPGFNLSPDQTTCE). The region spanning 1322–1364 (DIDECGLINEAHCEGSLEICINTMGSFRCECQDGFHRVNDTCQ) is the EGF-like 5; calcium-binding domain. A helical transmembrane segment spans residues 1531-1551 (IWLLVGVSVAVAVPLMIVIVI). The Cytoplasmic segment spans residues 1552–1593 (LYREYRRIAKQRRKTNNFDLRQWSGARERTIYSGFTNSKSAR).

As to expression, component of the acid-insoluble and acid-soluble organic matrix of the aragonitic skeleton (at protein level).

It localises to the membrane. The protein is Mucin-like protein of Acropora millepora (Staghorn coral).